The sequence spans 746 residues: Catalase-peroxidase (746 aa).

Residues 1 to 20 (MSSDTSSSRPPQPDSGTASK) are compositionally biased toward polar residues. The interval 1-42 (MSSDTSSSRPPQPDSGTASKSESENPAIPSPKPKAHAPLTNR) is disordered. The tryptophyl-tyrosyl-methioninium (Trp-Tyr) (with M-262) cross-link spans 113 to 236 (WHAAGTYRIH…YGATTMGLIY (124 aa)). His-114 (proton acceptor) is an active-site residue. Positions 236 to 262 (YVNPEGPEGKPDPIAAAIDIRETFGRM) form a cross-link, tryptophyl-tyrosyl-methioninium (Tyr-Met) (with W-113). His-277 is a heme b binding site.

The protein belongs to the peroxidase family. Peroxidase/catalase subfamily. In terms of assembly, homodimer or homotetramer. Requires heme b as cofactor. In terms of processing, formation of the three residue Trp-Tyr-Met cross-link is important for the catalase, but not the peroxidase activity of the enzyme.

It catalyses the reaction H2O2 + AH2 = A + 2 H2O. The enzyme catalyses 2 H2O2 = O2 + 2 H2O. Its function is as follows. Bifunctional enzyme with both catalase and broad-spectrum peroxidase activity. May play a role in the intracellular survival of mycobacteria. This chain is Catalase-peroxidase, found in Mycobacterium intracellulare.